A 312-amino-acid polypeptide reads, in one-letter code: Pyridoxal kinase (312 aa).

Met1 carries the post-translational modification N-acetylmethionine. Pyridoxal contacts are provided by Ser12 and Thr47. Pyridoxal 5'-phosphate is bound at residue Thr47. Residue Ser59 is modified to Phosphoserine. Asp113 is a binding site for ATP. Asp113 contacts Na(+). Residue Asp118 coordinates Mg(2+). Na(+) is bound at residue Thr148. 150–153 (NQFE) provides a ligand contact to ATP. Ser164 carries the post-translational modification Phosphoserine. Thr186 contacts Na(+). 186–187 (TS) serves as a coordination point for ATP. Ser213 carries the post-translational modification Phosphoserine. ATP contacts are provided by residues 226–228 (VEA) and Thr233. 234–235 (GD) is a binding site for pyridoxal 5'-phosphate. Residue Asp235 is the Proton acceptor of the active site. Ser285 bears the Phosphoserine mark.

The protein belongs to the pyridoxine kinase family. In terms of assembly, homodimer. Zn(2+) serves as cofactor. It depends on Mg(2+) as a cofactor.

Its subcellular location is the cytoplasm. It localises to the cytosol. The catalysed reaction is pyridoxal + ATP = pyridoxal 5'-phosphate + ADP + H(+). It carries out the reaction pyridoxamine + ATP = pyridoxamine 5'-phosphate + ADP + H(+). It catalyses the reaction pyridoxine + ATP = pyridoxine 5'-phosphate + ADP + H(+). It participates in cofactor metabolism; pyridoxal 5'-phosphate salvage; pyridoxal 5'-phosphate from pyridoxal: step 1/1. The protein operates within cofactor metabolism; pyridoxal 5'-phosphate salvage; pyridoxine 5'-phosphate from pyridoxine: step 1/1. Its pathway is cofactor metabolism; pyridoxal 5'-phosphate salvage; pyridoxamine 5'-phosphate from pyridoxamine: step 1/1. With respect to regulation, activity is increased in the presence of K(+)or Na(+). In terms of biological role, catalyzes the phosphorylation of the dietary vitamin B6 vitamers pyridoxal (PL), pyridoxine (PN) and pyridoxamine (PM) to form pyridoxal 5'-phosphate (PLP), pyridoxine 5'-phosphate (PNP) and pyridoxamine 5'-phosphate (PMP), respectively. PLP is the active form of vitamin B6, and acts as a cofactor for over 140 different enzymatic reactions. The polypeptide is Pyridoxal kinase (Mus musculus (Mouse)).